The sequence spans 132 residues: Fluoride-specific ion channel FluC 2 (132 aa).

4 helical membrane passes run 12–32 (LTELLLVAVGAVPGALLRWQL), 41–61 (LLVNVLGAALLGLLAGRPVAP), 65–85 (LLVGIGFCGSLTTFSSWMLAA), and 96–116 (AALGLIGLTLGLGLGAAALGF). Residues Gly73 and Thr76 each coordinate Na(+).

It belongs to the fluoride channel Fluc/FEX (TC 1.A.43) family.

It localises to the cell inner membrane. The enzyme catalyses fluoride(in) = fluoride(out). With respect to regulation, na(+) is not transported, but it plays an essential structural role and its presence is essential for fluoride channel function. In terms of biological role, fluoride-specific ion channel. Important for reducing fluoride concentration in the cell, thus reducing its toxicity. This Parasynechococcus marenigrum (strain WH8102) protein is Fluoride-specific ion channel FluC 2.